Reading from the N-terminus, the 470-residue chain is MSTSTSEPGAIAGLPLGAEVRTDGDATGLSVAIVGGGIVGIALALGLVERGVRVSVYERAQELPEIGVGFAFNGAARKSMARLSPLVMAAVERVANENEQAYDNYWDGYTSTAEDDESSTASKRGKLLFRMPNSNMAWWSCLRSQFLNEMLQALPPGTVTFGKELDSYDDPFDTSDPVRLRFTDGTTAAANVLIGSDGLRSRVRQQLFATSHPEVCNPTYTHKTCYRAVIPMAAAESAMGLSKPHNHCMHTGPRAHVLSYPIAQHKLVNVVLFVTHDEPWVDGTGDEAISVPRMTRPGDKKVLQNRLADWRPEVRNLVAQLPDAPTAWGIFDTAEHPVPFYAAGRVGLVGDAAHASSPHHGAGAGFGVEDALALAVALGMATEKKQSVAAALQAFNDVRYDRTQWLIRSSKETGDIYEWKHFGVGGDPVKIRAELEGRQKTIWDYDVDAMAEEVKTRYEARVTSETTAHQ.

Residues 28 to 48 (GLSVAIVGGGIVGIALALGLV) form a helical membrane-spanning segment. Residues Glu-58, Ala-71, and Arg-143 each contribute to the FAD site. Residues Arg-227 and Tyr-260 contribute to the active site. Positions 351 and 364 each coordinate FAD.

The protein belongs to the paxM FAD-dependent monooxygenase family. It depends on FAD as a cofactor.

The protein localises to the membrane. The protein operates within mycotoxin biosynthesis. In terms of biological role, FAD-dependent monooxygenase; part of the satratoxin SC1 cluster involved in the biosynthesis of satratoxins, trichothecene mycotoxins that are associated with human food poisonings. Satratoxins are suggested to be made by products of multiple gene clusters (SC1, SC2 and SC3) that encode 21 proteins in all, including polyketide synthases, acetyltransferases, and other enzymes expected to modify the trichothecene skeleton. SC1 encodes 10 proteins, SAT1 to SAT10. The largest are SAT8, which encodes a putative polyketide synthase (PKS) with a conventional non-reducing architecture, and SAT10, a putative protein containing four ankyrin repeats and thus may be involved in protein scaffolding. The putative short-chain reductase SAT3 may assist the PKS in some capacity. SAT6 contains a secretory lipase domain and acts probably as a trichothecene esterase. SAT5 encodes a putative acetyltransferase, and so, with SAT6, may affect endogenous protection from toxicity. The probable transcription factor SAT9 may regulate the expression of the SC1 cluster. SC2 encodes proteins SAT11 to SAT16, the largest of which encodes the putative reducing PKS SAT13. SAT11 is a cytochrome P450 monooxygenase, while SAT14 and SAT16 are probable acetyltransferases. The SC2 cluster may be regulated by the transcription factor SAT15. SC3 is a small cluster that encodes 5 proteins, SAT17 to SAT21. SAT21 is a putative MFS-type transporter which may have a role in exporting secondary metabolites. The four other proteins putatively encoded in SC3 include the taurine hydroxylase-like protein SAT17, the O-methyltransferase SAT18, the acetyltransferase SAT19, and the Cys6-type zinc finger SAT20, the latter being probably involved in regulation of SC3 expression. The chain is FAD-dependent monooxygenase SAT7 from Stachybotrys chartarum (strain CBS 109288 / IBT 7711) (Toxic black mold).